A 146-amino-acid polypeptide reads, in one-letter code: MRAVLQRVTRATCTVEGTITGQTGPGLLILLGVAPTDTPEVACALAGKTAKLRIFNDEAGKMNRSVLDIGGGVLSISQFTLYADTRSGNRPSFIAAAPPDRARELYGAFNEALRAQGLEVSEGVFGAHMVLDLTNDGPVTITLDVP.

Residues glycine 137–proline 138 carry the Gly-cisPro motif, important for rejection of L-amino acids motif.

Belongs to the DTD family. As to quaternary structure, homodimer.

The protein resides in the cytoplasm. It catalyses the reaction glycyl-tRNA(Ala) + H2O = tRNA(Ala) + glycine + H(+). The enzyme catalyses a D-aminoacyl-tRNA + H2O = a tRNA + a D-alpha-amino acid + H(+). In terms of biological role, an aminoacyl-tRNA editing enzyme that deacylates mischarged D-aminoacyl-tRNAs. Also deacylates mischarged glycyl-tRNA(Ala), protecting cells against glycine mischarging by AlaRS. Acts via tRNA-based rather than protein-based catalysis; rejects L-amino acids rather than detecting D-amino acids in the active site. By recycling D-aminoacyl-tRNA to D-amino acids and free tRNA molecules, this enzyme counteracts the toxicity associated with the formation of D-aminoacyl-tRNA entities in vivo and helps enforce protein L-homochirality. This Deinococcus deserti (strain DSM 17065 / CIP 109153 / LMG 22923 / VCD115) protein is D-aminoacyl-tRNA deacylase.